Here is a 225-residue protein sequence, read N- to C-terminus: MLSTLIKKLKIKPKQISLYKMSITHSSYANENKLKKKDNERLEFLGDAVINLLMADYLYTKKEKENEGFMSKKRAQSVCEDSLVIYAKSIQLQNYILLGKGEKNKNINNSILANAFEALFGAIYLDLGYYIAKKVFILIVIPRLSNIIDNIDFKTQLQELVQSQKKTISYYITEEKGLDHSKEFTAEVFLEKKNVGRGFGKTKKSAEQDAARYVLNILSKGEKND.

The RNase III domain occupies 2–128; the sequence is LSTLIKKLKI…LFGAIYLDLG (127 aa). Residue Glu43 participates in Mg(2+) binding. The active site involves Asp47. The Mg(2+) site is built by Asn114 and Glu117. The active site involves Glu117. The DRBM domain occupies 152-220; the sequence is DFKTQLQELV…ARYVLNILSK (69 aa).

It belongs to the ribonuclease III family. Homodimer. Mg(2+) serves as cofactor.

The protein resides in the cytoplasm. The catalysed reaction is Endonucleolytic cleavage to 5'-phosphomonoester.. Functionally, digests double-stranded RNA. Involved in the processing of primary rRNA transcript to yield the immediate precursors to the large and small rRNAs (23S and 16S). Processes some mRNAs, and tRNAs when they are encoded in the rRNA operon. Processes pre-crRNA and tracrRNA of type II CRISPR loci if present in the organism. This is Ribonuclease 3 from Phytoplasma mali (strain AT).